The chain runs to 200 residues: UPF0301 protein BR0480/BS1330_I0481 (200 aa).

This sequence belongs to the UPF0301 (AlgH) family.

The polypeptide is UPF0301 protein BR0480/BS1330_I0481 (Brucella suis biovar 1 (strain 1330)).